The primary structure comprises 487 residues: Cytochrome P450 2C21 (487 aa).

Heme is bound at residue cysteine 432.

It belongs to the cytochrome P450 family. The cofactor is heme. As to expression, liver.

It localises to the endoplasmic reticulum membrane. It is found in the microsome membrane. It catalyses the reaction an organic molecule + reduced [NADPH--hemoprotein reductase] + O2 = an alcohol + oxidized [NADPH--hemoprotein reductase] + H2O + H(+). Cytochromes P450 are a group of heme-thiolate monooxygenases. In liver microsomes, this enzyme is involved in an NADPH-dependent electron transport pathway. It oxidizes a variety of structurally unrelated compounds, including steroids, fatty acids, and xenobiotics. Showed testosterone hydrolase activity. This is Cytochrome P450 2C21 (CYP2C21) from Canis lupus familiaris (Dog).